Consider the following 433-residue polypeptide: Tol-Pal system protein TolB (433 aa).

The first 21 residues, 1–21 (MRNLLRGMLVVICCMAGIAAA), serve as a signal peptide directing secretion.

Belongs to the TolB family. In terms of assembly, the Tol-Pal system is composed of five core proteins: the inner membrane proteins TolA, TolQ and TolR, the periplasmic protein TolB and the outer membrane protein Pal. They form a network linking the inner and outer membranes and the peptidoglycan layer.

Its subcellular location is the periplasm. In terms of biological role, part of the Tol-Pal system, which plays a role in outer membrane invagination during cell division and is important for maintaining outer membrane integrity. This Pseudomonas fluorescens (strain ATCC BAA-477 / NRRL B-23932 / Pf-5) protein is Tol-Pal system protein TolB.